Here is a 298-residue protein sequence, read N- to C-terminus: Protein ABIL1 (298 aa).

The protein belongs to the ABI family. In terms of assembly, binds SCAR2. Expressed in seedlings, roots, hypocotyls, cotyledons, leaves, stems, and flowers.

The protein localises to the cytoplasm. The protein resides in the cytoskeleton. In terms of biological role, involved in regulation of actin and microtubule organization. Part of a WAVE complex that activates the Arp2/3 complex. The chain is Protein ABIL1 (ABIL1) from Arabidopsis thaliana (Mouse-ear cress).